Consider the following 337-residue polypeptide: Monoacylglycerol lipase ABHD6 (337 aa).

Over Met1–Met8 the chain is Extracellular. A helical; Signal-anchor for type II membrane protein membrane pass occupies residues Phe9 to Leu29. The Cytoplasmic portion of the chain corresponds to Trp30–Asp337. The region spanning Pro72 to Pro313 is the AB hydrolase-1 domain. Residue Phe80 participates in (9Z)-octadecenoate binding. Ser148 acts as the Nucleophile in catalysis. Met149 provides a ligand contact to (9Z)-octadecenoate. Residues Asp278 and His306 each act as charge relay system in the active site. A (9Z)-octadecenoate-binding site is contributed by His306.

It belongs to the AB hydrolase superfamily.

The protein localises to the late endosome membrane. The protein resides in the lysosome membrane. It is found in the mitochondrion membrane. It carries out the reaction Hydrolyzes glycerol monoesters of long-chain fatty acids.. It catalyses the reaction 1-octanoylglycerol + H2O = octanoate + glycerol + H(+). The enzyme catalyses 1-decanoylglycerol + H2O = decanoate + glycerol + H(+). The catalysed reaction is 1-dodecanoylglycerol + H2O = dodecanoate + glycerol + H(+). It carries out the reaction 1-tetradecanoylglycerol + H2O = tetradecanoate + glycerol + H(+). It catalyses the reaction 2-hexadecanoylglycerol + H2O = glycerol + hexadecanoate + H(+). The enzyme catalyses 2-(9Z-octadecenoyl)-glycerol + H2O = glycerol + (9Z)-octadecenoate + H(+). The catalysed reaction is 1-(9Z-octadecenoyl)-glycerol + H2O = glycerol + (9Z)-octadecenoate + H(+). It carries out the reaction 2-(9Z,12Z-octadecadienoyl)-glycerol + H2O = (9Z,12Z)-octadecadienoate + glycerol + H(+). It catalyses the reaction 2-(5Z,8Z,11Z,14Z-eicosatetraenoyl)-glycerol + H2O = glycerol + (5Z,8Z,11Z,14Z)-eicosatetraenoate + H(+). The enzyme catalyses 1-(5Z,8Z,11Z,14Z-eicosatetraenoyl)-glycerol + H2O = glycerol + (5Z,8Z,11Z,14Z)-eicosatetraenoate + H(+). The catalysed reaction is 1-(9Z,12Z-octadecadienoyl)-glycerol + H2O = (9Z,12Z)-octadecadienoate + glycerol + H(+). It carries out the reaction 3-(9Z-octadecenoyl)-sn-glycero-1-phospho-(3'-(9Z-octadecenoyl)-1'-sn-glycerol) + H2O = 3-(9Z-octadecenoyl)-sn-glycero-1-phospho-(1'-sn-glycerol) + (9Z)-octadecenoate + H(+). It catalyses the reaction (S,S)-2-(9Z-octadecenoyl)-sn-glycero-1-phospho-(2'-(9Z-octadecenoyl)-1'-sn-glycerol) + H2O = (S,S)-2-(9Z-octadecenoyl)-sn-glycero-1-phospho-(1'-sn-glycerol) + (9Z)-octadecenoate + H(+). The enzyme catalyses (R,R)-2-(9Z-octadecenoyl)-sn-glycero-3-phospho-(2'-(9Z-octadecenoyl)-3'-sn-glycerol) + H2O = (R,R)-2-(9Z-octadecenoyl)-sn-glycero-3-phospho-(3'-sn-glycerol) + (9Z)-octadecenoate + H(+). In terms of biological role, lipase that preferentially hydrolysis medium-chain saturated monoacylglycerols including 2-arachidonoylglycerol. Through 2-arachidonoylglycerol degradation may regulate endocannabinoid signaling pathways. Also has a lysophosphatidyl lipase activity with a preference for lysophosphatidylglycerol among other lysophospholipids. Also able to degrade bis(monoacylglycero)phosphate (BMP) and constitutes the major enzyme for BMP catabolism. BMP, also known as lysobisphosphatidic acid, is enriched in late endosomes and lysosomes and plays a key role in the formation of intraluminal vesicles and in lipid sorting. This is Monoacylglycerol lipase ABHD6 from Homo sapiens (Human).